An 88-amino-acid polypeptide reads, in one-letter code: Homeobox protein knotted-1-like 3 (88 aa).

The region spanning 4-24 is the ELK domain; sequence ELKKQLLRKYSGCLGNLRKEL. The segment at residues 25-88 is a DNA-binding region (homeobox; TALE-type); it reads CKKRKKDKLP…NQRKRHWKPS (64 aa).

This sequence belongs to the TALE/KNOX homeobox family. As to expression, strongly expressed in ear inflorescence primordia and shoot meristem. Weakly expressed in embryos. Absent from leaves.

It is found in the nucleus. Its function is as follows. Probably binds to the DNA sequence 5'-TGAC-3'. The polypeptide is Homeobox protein knotted-1-like 3 (KNOX3) (Zea mays (Maize)).